A 236-amino-acid polypeptide reads, in one-letter code: 2-C-methyl-D-erythritol 4-phosphate cytidylyltransferase (236 aa).

Belongs to the IspD/TarI cytidylyltransferase family. IspD subfamily. In terms of assembly, homodimer.

The catalysed reaction is 2-C-methyl-D-erythritol 4-phosphate + CTP + H(+) = 4-CDP-2-C-methyl-D-erythritol + diphosphate. The protein operates within isoprenoid biosynthesis; isopentenyl diphosphate biosynthesis via DXP pathway; isopentenyl diphosphate from 1-deoxy-D-xylulose 5-phosphate: step 2/6. Catalyzes the formation of 4-diphosphocytidyl-2-C-methyl-D-erythritol from CTP and 2-C-methyl-D-erythritol 4-phosphate (MEP). This chain is 2-C-methyl-D-erythritol 4-phosphate cytidylyltransferase, found in Salmonella newport (strain SL254).